A 395-amino-acid polypeptide reads, in one-letter code: Ketol-acid reductoisomerase, mitochondrial (395 aa).

The transit peptide at 1–47 (MLRTQAARLICNSRVITAKRTFALATRAAAYSRPAARFVKPMITTRG) directs the protein to the mitochondrion. A KARI N-terminal Rossmann domain is found at 57–246 (VETVYERADW…AIGSGYVYQT (190 aa)). NADP(+) contacts are provided by residues 84–93 (GYGSQGYGQG), 108–113 (RKDGAS), and 146–150 (SDAAQ). Residue His171 is part of the active site. The region spanning 247–394 (TFEREVNSDL…KEVRKLRPEN (148 aa)) is the KARI C-terminal knotted domain. Mg(2+) is bound by residues Asp255, Glu259, Glu291, and Glu295. Position 317 (Ser317) interacts with substrate. Ser355 carries the post-translational modification Phosphoserine. Positions 363–395 (DYREKLEKELDTIRNMEIWKVGKEVRKLRPENQ) are hydrophilic.

It belongs to the ketol-acid reductoisomerase family. It depends on Mg(2+) as a cofactor.

It localises to the mitochondrion. The enzyme catalyses (2R)-2,3-dihydroxy-3-methylbutanoate + NADP(+) = (2S)-2-acetolactate + NADPH + H(+). The catalysed reaction is (2R,3R)-2,3-dihydroxy-3-methylpentanoate + NADP(+) = (S)-2-ethyl-2-hydroxy-3-oxobutanoate + NADPH + H(+). It functions in the pathway amino-acid biosynthesis; L-isoleucine biosynthesis; L-isoleucine from 2-oxobutanoate: step 2/4. Its pathway is amino-acid biosynthesis; L-valine biosynthesis; L-valine from pyruvate: step 2/4. Involved in the biosynthesis of branched-chain amino acids (BCAA). Catalyzes the second common step in the parallel biosynthesis of isoleucine and valine. Converts alpha-aceto-alpha-hydroxybutyrate (AHB) to alpha,beta-dihydroxy-beta-methylvalerate (DHMV) and alpha-acetolactate (AL) to alpha,beta-dihydroxy-isovalerate (DHV) in isoleucine and valine biosynthesis, respectively. This is Ketol-acid reductoisomerase, mitochondrial from Saccharomyces cerevisiae (strain ATCC 204508 / S288c) (Baker's yeast).